The chain runs to 219 residues: MDQLEMKKMAAAAALQYVKPDSIIGVGSGSTVNCFIEALGSMRDQIKGAVAASKASEALLAKQGIEVFSANEVSSLDIYVDGADEINPQKMMIKGGGAALTREKIVAALAKKFICIVDTSKQVDVLGSTFALPVEVIPMARSQVARKLVALGGSPEYREGVVTDNGNVILDVYHFAIMNPVEMEKELNNVPGVVTNGIFALRAADIIIVGTPEGAKVIE.

Residues 28 to 31, 81 to 84, and 94 to 97 each bind substrate; these read SGST, DGAD, and KGGG. The active-site Proton acceptor is glutamate 103. Lysine 121 provides a ligand contact to substrate.

This sequence belongs to the ribose 5-phosphate isomerase family. In terms of assembly, homodimer.

It carries out the reaction aldehydo-D-ribose 5-phosphate = D-ribulose 5-phosphate. Its pathway is carbohydrate degradation; pentose phosphate pathway; D-ribose 5-phosphate from D-ribulose 5-phosphate (non-oxidative stage): step 1/1. Functionally, catalyzes the reversible conversion of ribose-5-phosphate to ribulose 5-phosphate. The sequence is that of Ribose-5-phosphate isomerase A from Pasteurella multocida (strain Pm70).